The following is a 591-amino-acid chain: ADP-ribosylating toxin CARDS (591 aa).

The tract at residues 1-205 is mono-ADP ribosyltransferase (mART) domain; that stretch reads MPNPVRFVYR…LPTPGIATPV (205 aa). The NAD(+)-binding pocket stretch occupies residues 206-256; sequence HLSIPQAASVADVSEGTSASLSFACPDWSPPSSNGENPLDKCIAEKIDNYN. Cysteine 230 and cysteine 247 are joined by a disulfide. A KELED motif, involved in host ER trafficking, solvent exposed in the crystal structure motif is present at residues 268–272; the sequence is KELED. The tract at residues 273-439 is D2 domain; the sequence is TPVYLRGIKT…QFVTMRAAST (167 aa). The tract at residues 440–591 is D3 domain; that stretch reads FFVDVQLGWY…ILVKDGFDRF (152 aa).

The protein belongs to the bacterial exotoxin subunit A family. In terms of assembly, monomer. Binds to host (human) pulmonary surfactant-associated protein A1 (SFTPA1), the major mammalian protein component of pulmonary surfactant. Binds to host (human) surface annexin A2 (ANXA2) on the cell surface; anti-ANXA2 antibodies decrease binding to cells. Interacts with cytosolic host (human) NLRP3, which it ADP-ribosylates in vitro. In terms of processing, 8 hours after treatment of HeLa cells with purified protein, a substantial amount is processed to 2 nearly equal-sized fragments. The disulfide bond between Cys-230 and Cys-247 is required to for the toxin to exert its mART and vacuolating activities within target cells, and for protein processing. Acidic pH in the endosome and retrograde transport are required for toxin cleavage, which is required for both toxin activities. Trypsin treatment under mild conditions leads to cleavage at Lys-305 and Lys-307; the 2 proteins fragments remain associated and can be internalized and vacuolate HeLa cells.

Its subcellular location is the cell membrane. The protein resides in the cytoplasm. The protein localises to the cell surface. It is found in the cell projection. It localises to the attachment organelle. Its subcellular location is the host cytoplasm. The protein resides in the host cytosol. The protein localises to the host endoplasmic reticulum. Its activity is regulated as follows. In vitro ADP-ribosylation is enhanced by dithiotheritol. In terms of biological role, the main virulence factor for this bacteria, a mono-ADP-ribosylating toxin (mART), that transfers the ADP-ribosyl group from NAD(+) to multiple target proteins in vitro. Also elicits cytopathic effects in mammalian cells, such as disorganization and disruption of respiratory epithelial integrity in tracheal epithelium and vacuolization in the cytoplasm of CHO and HeLa cells as well as in mice and baboons. Treatment of mice or baboons with CARDS elicits a response that is consistent with human M.pneumoniae infections and mouse models of both infection and intoxication, suggesting that CARDS toxin is sufficient to cause prolonged inflammatory responses and airway dysfunction. Treatment of baboons with CARDS induces a number of cytokines; G-CSF (40 fold), IL-1Ra (10 fold), IL-6 and IL-8 (333 and 100 fold, respectively), MIP-1a (5 fold), and RANTES (9 fold). Treatment of mice gives a similar response. Binds phosphatidyl choline, dipalmitoylphosphatidylcholine (DPPC) and sphingomyelin via domains D2 plus D3. Has at least 2 host receptors SFTPA1 and ANXA2. Internalized by a clathrin-mediated process; protein is rapidly taken up at 37 degrees Celsius. Clathrin-independent or caveolin-dependent endocytosis were not detected. In HeLa cells internalized CARDS trafficks toward the nucleus by retrograde transport from early to late endosomes, then the Golgi apparatus; at 16 hours most toxin is concentrated in the perinuclear region in the host endoplasmic reticulum (ER). Failure to localize to the host ER prevents ADP-ribosylation and vacuolization. An acidic compartment is required to mediate retrotransport and processing of toxin into an N-terminal fragment with mART activity and a C-terminal fragment that is able to induce vacuolization. Functionally, induces the host NLRP3 inflammasome to release interleukin-1 beta (IL-1 beta); IL-1 beta release requires ADP-ribosylation activity and uptake by host macrophages. In the host colocalizes with the NLRP3 inflammasome; ADP-ribosylates NLRP3 in vitro. ADP-ribosylation of NLRP3 may lead to hyperinflammation. In Mycoplasma pneumoniae (strain ATCC 29342 / M129 / Subtype 1) (Mycoplasmoides pneumoniae), this protein is ADP-ribosylating toxin CARDS.